The sequence spans 456 residues: Probable transcription factor At3g04930 (456 aa).

Residues Met1–Pro71 are disordered. Composition is skewed to acidic residues over residues Glu15–Asp38 and Ala50–Leu62. Ser16 carries the post-translational modification Phosphoserine.

The protein belongs to the GeBP family.

The sequence is that of Probable transcription factor At3g04930 from Arabidopsis thaliana (Mouse-ear cress).